Consider the following 115-residue polypeptide: MTTSTAAAAKSAYRQLLRSTRVVFHNDLPVLIAARQEARQNFEKNRRPAVDTGMQINHAIEVANILRHNIVQGSREQGDETAKWELNIHDQIERGDNDSIKVGNQDVKIHKACSS.

The transit peptide at 1 to 23 (MTTSTAAAAKSAYRQLLRSTRVV) directs the protein to the mitochondrion.

This sequence belongs to the complex I LYR family. MZM1 subfamily. In terms of assembly, interacts with RIP1.

It localises to the mitochondrion matrix. Its function is as follows. Assembly factor required for Rieske Fe-S protein RIP1 incorporation into the cytochrome b-c1 (CIII) complex. Functions as a chaperone, binding to this subunit within the mitochondrial matrix and stabilizing it prior to its translocation and insertion into the late CIII dimeric intermediate within the mitochondrial inner membrane. Modulates the mitochondrial matrix zinc pool. The protein is Mitochondrial zinc maintenance protein 1, mitochondrial (MZM1) of Penicillium rubens (strain ATCC 28089 / DSM 1075 / NRRL 1951 / Wisconsin 54-1255) (Penicillium chrysogenum).